A 500-amino-acid chain; its full sequence is Lysine--tRNA ligase (500 aa).

Glu-410 and Glu-417 together coordinate Mg(2+).

This sequence belongs to the class-II aminoacyl-tRNA synthetase family. As to quaternary structure, homodimer. The cofactor is Mg(2+).

The protein localises to the cytoplasm. It catalyses the reaction tRNA(Lys) + L-lysine + ATP = L-lysyl-tRNA(Lys) + AMP + diphosphate. The chain is Lysine--tRNA ligase from Pseudomonas entomophila (strain L48).